Here is a 420-residue protein sequence, read N- to C-terminus: Diaminopimelate decarboxylase (420 aa).

Lysine 65 carries the post-translational modification N6-(pyridoxal phosphate)lysine. Pyridoxal 5'-phosphate is bound by residues glycine 244 and 279 to 282; that span reads EPGR. Residues arginine 282, arginine 318, and tyrosine 322 each contribute to the substrate site. Cysteine 348 acts as the Proton donor in catalysis. Positions 349 and 377 each coordinate substrate. Tyrosine 377 lines the pyridoxal 5'-phosphate pocket.

The protein belongs to the Orn/Lys/Arg decarboxylase class-II family. LysA subfamily. As to quaternary structure, homodimer. Requires pyridoxal 5'-phosphate as cofactor.

It carries out the reaction meso-2,6-diaminopimelate + H(+) = L-lysine + CO2. It participates in amino-acid biosynthesis; L-lysine biosynthesis via DAP pathway; L-lysine from DL-2,6-diaminopimelate: step 1/1. Functionally, specifically catalyzes the decarboxylation of meso-diaminopimelate (meso-DAP) to L-lysine. This Aquifex aeolicus (strain VF5) protein is Diaminopimelate decarboxylase (lysA).